The following is a 387-amino-acid chain: uncharacterized protein (387 aa).

The first 27 residues, 1–27 (MKKWMITIAMLILAGIALFVFISPLKS), serve as a signal peptide directing secretion.

This is an uncharacterized protein from Bacillus subtilis (strain 168).